A 675-amino-acid chain; its full sequence is G-protein coupled receptor moody (675 aa).

At 1–44 (MSDETTGSLGDAFSPMDTPTTTIMPPPADVDESGFSHSLLTFAA) the chain is on the extracellular side. Residues 45–65 (VMTFLIMIVGICGNLLTVVAL) form a helical membrane-spanning segment. At 66 to 73 (LKCPKVRN) the chain is on the cytoplasmic side. A helical transmembrane segment spans residues 74–94 (VAAAFIISLCIADLLFCALVL). At 95 to 115 (PFQGLRFVQGTWRHGEVLCRL) the chain is on the extracellular side. Cys113 and Cys192 are disulfide-bonded. The helical transmembrane segment at 116–136 (IPFIQYGNIGVSLLCIAMITI) threads the bilayer. The Cytoplasmic portion of the chain corresponds to 137–156 (NRYVMITHYSLYNRIYKRHW). The helical transmembrane segment at 157–177 (IAIMIAACWLFSYGMQLPTLL) threads the bilayer. Over 178–206 (GAWGRFGYDARLQTCSIMSDRHGHSSKTT) the chain is Extracellular. Residues 207–227 (LFITAFVIPCLVIIACYAKIF) form a helical membrane-spanning segment. Topologically, residues 228-327 (WVVHKSEQRL…AKRNEWRITK (100 aa)) are cytoplasmic. Positions 258 to 316 (TSMPSGDGANPSQVPAGCRVSSDSSSNYSTDVPDTTPGGAGGGAGVKQQPSRVKDQREV) are disordered. Positions 278–294 (SSDSSSNYSTDVPDTTP) are enriched in low complexity. A helical membrane pass occupies residues 328–348 (MVLAIFLSFVICYLPITIVKV). Residues 349 to 359 (ADKDVEHPSLH) are Extracellular-facing. The helical transmembrane segment at 360-380 (IFSYIMLYLSACINPIIYVIM) threads the bilayer. Over 381–675 (NKQYRKAYKT…LMDKKKFPKD (295 aa)) the chain is Cytoplasmic. 2 disordered regions span residues 475 to 568 (SKSS…GNGS) and 588 to 675 (LPPT…FPKD). The segment covering 536–551 (SSVISANPSSSPSPSS) has biased composition (low complexity). The span at 552–565 (SGGGIYRPGIGSMG) shows a compositional bias: gly residues. Over residues 666 to 675 (LMDKKKFPKD) the composition is skewed to basic and acidic residues.

This sequence belongs to the G-protein coupled receptor 1 family.

Its subcellular location is the cell membrane. In terms of biological role, required in glia to regulate the acute sensitivity to cocaine and to continuously maintain the proper blood-brain barrier (BBB) function. A moody-mediated signaling pathway functions in glia to regulate nervous system insulation and drug-related behaviors. The sequence is that of G-protein coupled receptor moody from Drosophila pseudoobscura pseudoobscura (Fruit fly).